A 202-amino-acid chain; its full sequence is ATP-dependent Clp protease proteolytic subunit 1 (202 aa).

Serine 99 serves as the catalytic Nucleophile. Histidine 123 is an active-site residue.

This sequence belongs to the peptidase S14 family. Fourteen ClpP subunits assemble into 2 heptameric rings which stack back to back to give a disk-like structure with a central cavity, resembling the structure of eukaryotic proteasomes.

The protein localises to the cytoplasm. It carries out the reaction Hydrolysis of proteins to small peptides in the presence of ATP and magnesium. alpha-casein is the usual test substrate. In the absence of ATP, only oligopeptides shorter than five residues are hydrolyzed (such as succinyl-Leu-Tyr-|-NHMec, and Leu-Tyr-Leu-|-Tyr-Trp, in which cleavage of the -Tyr-|-Leu- and -Tyr-|-Trp bonds also occurs).. Cleaves peptides in various proteins in a process that requires ATP hydrolysis. Has a chymotrypsin-like activity. Plays a major role in the degradation of misfolded proteins. This Symbiobacterium thermophilum (strain DSM 24528 / JCM 14929 / IAM 14863 / T) protein is ATP-dependent Clp protease proteolytic subunit 1.